Reading from the N-terminus, the 873-residue chain is DNA mismatch repair protein PMS1 (873 aa).

A DNA- and ATP-binding region spans residues 1 to 357; it reads MTQIHQINDI…FKTTLSDYYN (357 aa). Residues 379-402 show a composition bias toward basic and acidic residues; the sequence is LKTEVFDDRSTTHESDNENYHTAR. Residues 379-423 form a disordered region; sequence LKTEVFDDRSTTHESDNENYHTARSESNQSNHAHFNSTTGVIDKS. The residue at position 393 (serine 393) is a Phosphoserine. Residues 403 to 423 show a composition bias toward polar residues; that stretch reads SESNQSNHAHFNSTTGVIDKS. Serine 566 bears the Phosphoserine mark. The segment at 661-873 is interaction with MLH1; the sequence is YLTLTVSKND…WSSFSKDYEI (213 aa).

This sequence belongs to the DNA mismatch repair MutL/HexB family. As to quaternary structure, heterodimer of MLH1 and PMS1, called MutLalpha, which is the major MMR MutL activity correcting base-base mismatches as well as IDLs. The heterodimer binds double strand DNA independently of a mismatch with positive cooperativity and has more than one DNA binding site. Forms a ternary complex with either the MSH2-MSH6 (MutSalpha) or the MSH2-MSH3 heterodimer (MutSbeta), which recognize and bind to mismatch DNA. Ternary complex formation is promoted by ATP binding.

The protein resides in the nucleus. Required for DNA mismatch repair (MMR), correcting base-base mismatches and insertion-deletion loops (IDLs) resulting from DNA replication, DNA damage or from recombination events between non-identical sequences during meiosis. Component of the MutLalpha heterodimer that forms a ternary complex with the MutS heterodimers, which initially recognize the DNA mismatches. This complex is thought to be responsible for directing the downstream MMR events, including strand discrimination, excision, and resynthesis. Plays a major role in maintaining the genetic stability of simple sequence repeats and in the repair of heteroduplex sites present in meiotic recombination intermediates. The protein is DNA mismatch repair protein PMS1 (PMS1) of Saccharomyces cerevisiae (strain ATCC 204508 / S288c) (Baker's yeast).